Here is a 143-residue protein sequence, read N- to C-terminus: Small ribosomal subunit protein bS6 (143 aa).

The interval glycine 95 to alanine 143 is disordered. A compositionally biased stretch (basic and acidic residues) spans lysine 105–aspartate 121.

This sequence belongs to the bacterial ribosomal protein bS6 family.

In terms of biological role, binds together with bS18 to 16S ribosomal RNA. The protein is Small ribosomal subunit protein bS6 of Xylella fastidiosa (strain M23).